Reading from the N-terminus, the 196-residue chain is Late protein I196L (196 aa).

Tandem repeats lie at residues 28-48 (SNYL…PTTS) and 49-70 (SNYL…TTTS). A 3; approximate repeat occupies 71 to 92 (SNYLTSAIPNIISDKEDDTPFS).

It belongs to the asfivirus I196L family.

This is Late protein I196L from African swine fever virus (strain Badajoz 1971 Vero-adapted) (Ba71V).